A 100-amino-acid chain; its full sequence is Small ribosomal subunit protein uS14c (100 aa).

This sequence belongs to the universal ribosomal protein uS14 family. In terms of assembly, part of the 30S ribosomal subunit.

Its subcellular location is the plastid. It is found in the chloroplast. Its function is as follows. Binds 16S rRNA, required for the assembly of 30S particles. The sequence is that of Small ribosomal subunit protein uS14c from Arabis hirsuta (Hairy rock-cress).